The chain runs to 508 residues: Aromatase (508 aa).

Residue Cys-437 participates in heme binding.

It belongs to the cytochrome P450 family. Requires heme as cofactor.

The protein resides in the membrane. It carries out the reaction testosterone + 3 reduced [NADPH--hemoprotein reductase] + 3 O2 = 17beta-estradiol + formate + 3 oxidized [NADPH--hemoprotein reductase] + 4 H2O + 4 H(+). The catalysed reaction is androst-4-ene-3,17-dione + 3 reduced [NADPH--hemoprotein reductase] + 3 O2 = estrone + formate + 3 oxidized [NADPH--hemoprotein reductase] + 4 H2O + 4 H(+). In terms of biological role, catalyzes the formation of aromatic C18 estrogens from C19 androgens. This is Aromatase (Cyp19a1) from Rattus norvegicus (Rat).